A 223-amino-acid chain; its full sequence is Phosphoribosylformylglycinamidine synthase subunit PurQ (223 aa).

Positions 3–223 constitute a Glutamine amidotransferase type-1 domain; it reads SAVVQLPGLN…FASALDVVAA (221 aa). The active-site Nucleophile is Cys-86. Catalysis depends on residues His-196 and Glu-198.

Part of the FGAM synthase complex composed of 1 PurL, 1 PurQ and 2 PurS subunits.

It localises to the cytoplasm. It catalyses the reaction N(2)-formyl-N(1)-(5-phospho-beta-D-ribosyl)glycinamide + L-glutamine + ATP + H2O = 2-formamido-N(1)-(5-O-phospho-beta-D-ribosyl)acetamidine + L-glutamate + ADP + phosphate + H(+). It carries out the reaction L-glutamine + H2O = L-glutamate + NH4(+). It functions in the pathway purine metabolism; IMP biosynthesis via de novo pathway; 5-amino-1-(5-phospho-D-ribosyl)imidazole from N(2)-formyl-N(1)-(5-phospho-D-ribosyl)glycinamide: step 1/2. Functionally, part of the phosphoribosylformylglycinamidine synthase complex involved in the purines biosynthetic pathway. Catalyzes the ATP-dependent conversion of formylglycinamide ribonucleotide (FGAR) and glutamine to yield formylglycinamidine ribonucleotide (FGAM) and glutamate. The FGAM synthase complex is composed of three subunits. PurQ produces an ammonia molecule by converting glutamine to glutamate. PurL transfers the ammonia molecule to FGAR to form FGAM in an ATP-dependent manner. PurS interacts with PurQ and PurL and is thought to assist in the transfer of the ammonia molecule from PurQ to PurL. This is Phosphoribosylformylglycinamidine synthase subunit PurQ from Rhizobium etli (strain ATCC 51251 / DSM 11541 / JCM 21823 / NBRC 15573 / CFN 42).